The chain runs to 999 residues: uncharacterized protein (999 aa).

The segment covering 45–128 has biased composition (low complexity); the sequence is NSNNIGNGNG…TPTITPSSPS (84 aa). The tract at residues 45–129 is disordered; the sequence is NSNNIGNGNG…PTITPSSPSV (85 aa). Residues 723-767 adopt a coiled-coil conformation; that stretch reads YQQSQQQQSQQQQQQQQQQQQQQQQQQQQQQQQQQQQQQQQQQQQ. Low complexity predominate over residues 873-887; that stretch reads NDINNANNSNNNNNN. Positions 873 to 904 are disordered; that stretch reads NDINNANNSNNNNNNQSQVLLSPNRNKDGTLN. A helical membrane pass occupies residues 976 to 996; sequence LFSLVLILAFIWFFFEIYFFF.

The protein resides in the membrane. This is an uncharacterized protein from Dictyostelium discoideum (Social amoeba).